Here is a 325-residue protein sequence, read N- to C-terminus: Alpha-cuprenene synthase COP6 (325 aa).

Residues Asp102, Glu166, Asn224, Ser228, and Glu232 each contribute to the Mg(2+) site.

Belongs to the trichodiene synthase family. Requires Mg(2+) as cofactor.

Its function is as follows. Alpha-cuprenene synthase; part of the gene cluster that mediates the biosynthesis of alpha-cuprenene and oxidized derivatives. The alpha-cuprenene synthase COP6 is the only sesquiterpene synthase identified in C.cinereus that appears to be part of a biosynthetic gene cluster and is highly specific since it catalyzes the cyclization of (2E,6E)-farnesyl diphosphate into only one product, alpha-cuprenene. COP6 is also able to perform the cyclization of geranyl diphosphate. The cytochrome P450 monooxygenase COX2 then oxidizes the cyclohexadiene ring of alpha-cuprenene at positions 1 and 4, yielding first alpha-cuparene, followed by alpha-cuparophenol and a further yet unidentified compound resulting from one additional oxidation step. The cytochrome P450 monooxygenase COX1 then likely catalyzes the oxidation at position 9 of the pentane ring of alpha-cuprenene to give the corresponding hydroxy or ketone derivatives. This chain is Alpha-cuprenene synthase COP6, found in Coprinopsis cinerea (strain Okayama-7 / 130 / ATCC MYA-4618 / FGSC 9003) (Inky cap fungus).